The sequence spans 398 residues: 8-amino-7-oxononanoate synthase (398 aa).

Arg-26 contributes to the substrate binding site. 113–114 (GF) contributes to the pyridoxal 5'-phosphate binding site. His-138 provides a ligand contact to substrate. Pyridoxal 5'-phosphate is bound by residues Ser-181, His-209, and Thr-238. Lys-241 carries the N6-(pyridoxal phosphate)lysine modification. Thr-355 contacts substrate.

It belongs to the class-II pyridoxal-phosphate-dependent aminotransferase family. BioF subfamily. Homodimer. Requires pyridoxal 5'-phosphate as cofactor.

The enzyme catalyses 6-carboxyhexanoyl-[ACP] + L-alanine + H(+) = (8S)-8-amino-7-oxononanoate + holo-[ACP] + CO2. The protein operates within cofactor biosynthesis; biotin biosynthesis. Functionally, catalyzes the decarboxylative condensation of pimeloyl-[acyl-carrier protein] and L-alanine to produce 8-amino-7-oxononanoate (AON), [acyl-carrier protein], and carbon dioxide. The protein is 8-amino-7-oxononanoate synthase of Aeromonas hydrophila subsp. hydrophila (strain ATCC 7966 / DSM 30187 / BCRC 13018 / CCUG 14551 / JCM 1027 / KCTC 2358 / NCIMB 9240 / NCTC 8049).